The following is a 1019-amino-acid chain: MTLNNCASMKLEVHFQCKQDDDSEEEEQCTISSHWAFEQESKCGSLMGSSALLAPPSPSLLGTSSCESVLTELSAASLPAISASLSPESADQPLLGLVPSPSNQPFLSPPQGQEGSQDKVKKHYSRSFLKHLESLRRKEKGDSRQTEPEQCLATSEKATKASSFRTCRGFLSAGFHRAKNRVTTSARVRDGETQKAWEAWPVATFRHPQPIRRRDYLVHVPGDHKPGTFPRSLSIESLCPDEGRHLADWQSSRCWGYEGRRGSCGSTGSHASTYDNLPELYPAEPIQAEAEAEAEEGEGSYAHLDDILEHVWGLQQRVELWSQTMYPDLRPGDKEEEEEEEEEEEEATSSVEVATVEVEGQDEDLAQAESQAHRGFPTQVKEEVPLIVLDQAPNVVEPLVQAEAEAPAQAQDLEQEANSTAEPISASSLSVEEGHSISDTAVSSSELDSSGNSMNEADAADAPAGLQASVPRERRDSGVGASLTRPCRKLRWHSFQNSHRPSLNSESLEINRQFAGQINLLHKGSLLRLTGFMEKYTVPHKQAWVWSMPKFMKRNKTPDYRGHHVFGVPPLIHVQRTGQPLPQSIQQAMRYLRSQCLDQVGIFRKSGVKSRIQSLRQMNENSPDNVCYEGQSAYDVADLLKQYFRDLPEPIFTSKLTTTFLQIYQLLPKEQWLAAAQAATLLLPDENREVLQTLLYFLSDIASAEENQMTAGNLAVCLAPSIFHLNVSKKDSSSPRIKSKRSLVGRPGPRDLSENMAATQGLSHMISDCKKLFQVPQDMVVQLCGSYSAAELSPPGPALAELRQAQAAGVSLSLYMEESVQELLRDAAERFKGWTNVPGPQHTELACRKAPDGHPLRMWKASTEVAAPPAVVLHRVLRERALWDEDLLRAQVLEALMPGVELYHYVTDSMAPHPCRDFVVLRMWRSDLPRGGCLLVSQSLDPEQPVPESGVRALMLTSQYLMEPCGLGRSRLTHICRADLRGRSPDWYNKVFGHLCAMEVAKIRDSFPTLQAAGPETKL.

2 disordered regions span residues 92–122 (QPLL…KVKK) and 134–154 (SLRR…CLAT). A compositionally biased stretch (polar residues) spans 100–115 (SPSNQPFLSPPQGQEG). S108 carries the phosphoserine modification. Basic and acidic residues predominate over residues 134-147 (SLRRKEKGDSRQTE). R168 is subject to Asymmetric dimethylarginine. A phosphoserine mark is found at S234 and S237. 2 disordered regions span residues 325-355 (MYPD…EVAT) and 406-482 (APAQ…VGAS). Positions 334 to 347 (KEEEEEEEEEEEEA) are enriched in acidic residues. Polar residues-rich tracts occupy residues 418–430 (NSTA…SSLS) and 437–455 (ISDT…NSMN). Residues S494 and S502 each carry the phosphoserine modification. Residues 569 to 773 (PPLIHVQRTG…HMISDCKKLF (205 aa)) enclose the Rho-GAP domain. A disordered region spans residues 731 to 754 (DSSSPRIKSKRSLVGRPGPRDLSE). The 209-residue stretch at 805-1013 (AQAAGVSLSL…RDSFPTLQAA (209 aa)) folds into the START domain.

As to quaternary structure, binds both the SH2 and PTB domains of TNS1.

It localises to the cell junction. It is found in the focal adhesion. Accelerates GTPase activity of RHOA and CDC42, but not RAC1. Stimulates the hydrolysis of phosphatidylinositol 4,5-bisphosphate by PLCD1. The polypeptide is StAR-related lipid transfer protein 8 (Stard8) (Mus musculus (Mouse)).